We begin with the raw amino-acid sequence, 525 residues long: Erythropoietin receptor (525 aa).

An N-terminal signal peptide occupies residues 1–32 (MGAPSSLLFSTAHWRTVPFLLAFWVLLSTGTA). Over 33–249 (EDPTMTPEFL…TIATIIDLRL (217 aa)) the chain is Extracellular. Cysteine 58 and cysteine 68 are disulfide-bonded. Asparagine 77, asparagine 100, asparagine 149, and asparagine 185 each carry an N-linked (GlcNAc...) asparagine glycan. Cysteine 91 and cysteine 107 are oxidised to a cystine. In terms of domain architecture, Fibronectin type-III spans 146 to 246 (PPLNVTVKEK…APITIATIID (101 aa)). Positions 232–236 (WSDWT) match the WSXWS motif motif. A helical membrane pass occupies residues 250–270 (LLLLSIAIFVALIAGVGVYIF). The Cytoplasmic portion of the chain corresponds to 271–525 (MRHGMYLKHK…NFLAPIYSQS (255 aa)). The Box 1 motif motif lies at 281–289 (VWPQVPTPE). Disordered regions lie at residues 434-459 (APRMEHERHRVSRENSVSSDGKQSIP) and 492-513 (LDMSSSGEHSPPPSPNFYQNSP). The segment covering 447–459 (ENSVSSDGKQSIP) has biased composition (polar residues). The ITIM motif signature appears at 487–492 (LKYAYL).

Belongs to the type I cytokine receptor family. Type 1 subfamily. Expressed in the ventral blood island from stage 28 through to stage 36. Expressed in the circulating blood by stage 40. In the adult, highly expressed in peripheral blood cells including immature erythrocytes and basophils, and moderately expressed in the hematopoietic organs: liver, kidney and spleen. Expressed at a low level in adult brain.

It is found in the cell membrane. Functionally, receptor for erythropoietin. Mediates erythropoietin-induced erythroblast proliferation and differentiation. This Xenopus laevis (African clawed frog) protein is Erythropoietin receptor.